We begin with the raw amino-acid sequence, 476 residues long: Stromelysin-2 (476 aa).

The signal sequence occupies residues 1 to 17 (MEPLAILALLSLPICSA). The propeptide at 18 to 99 (YPLHGAVTQG…PRCGVPDVGG (82 aa)) is activation peptide. Residues 90–97 (PRCGVPDV) carry the Cysteine switch motif. Zn(2+) contacts are provided by C92, H168, D170, H183, H196, and H218. E219 is an active-site residue. The Zn(2+) site is built by H222 and H228. 4 Hemopexin repeats span residues 286–335 (PDKC…WPTL), 336–382 (PSDL…GFPP), 384–432 (VKKI…FPGI), and 433–476 (EPQV…WLLC). C289 and C476 are disulfide-bonded.

This sequence belongs to the peptidase M10A family. Zn(2+) serves as cofactor. Ca(2+) is required as a cofactor. As to expression, expressed in small intestine. Weak levels in heart and lung.

Its subcellular location is the secreted. It is found in the extracellular space. It localises to the extracellular matrix. The enzyme catalyses Similar to stromelysin 1, but action on collagen types III, IV and V is weak.. In terms of biological role, can degrade fibronectin, gelatins of type I, III, IV, and V; weakly collagens III, IV, and V. Activates procollagenase. This is Stromelysin-2 (Mmp10) from Mus musculus (Mouse).